A 277-amino-acid polypeptide reads, in one-letter code: Methyltransferase str3 (277 aa).

The protein belongs to the methyltransferase superfamily. LaeA methyltransferase family.

Its pathway is mycotoxin biosynthesis. Its function is as follows. Methyltransferase; part of the gene cluster that mediates the biosynthesis of strobilurin A, an antifungal polyketide that contains a key beta-methoxyacrylate toxophore that targets the complex III of the mitochondrial electron transport chain. Strobilurin biosynthesis begins with construction of benzoyl CoA by step-wise elimination of ammonia from phenylalanine by the phenylalanine ammonia-lyase str11, oxygenation by str8 and retro-Claisen reaction to form benzoic acid, which is activated to its CoA thiolester benzoyl CoA by the dedicated CoA ligase str10. Benzoyl CoA forms the starter unit for the highly reducing polyketide synthase stpks1 that produces the polyketide prestrobilutin A. The FAD-dependent oxygenase str9 then catalyzes the key oxidative rearrangement responsible for the creation of the beta-methoxyacrylate toxophore. Str9 performs epoxidation of the 2,3 olefin of prestrobilutin A, followed by Meinwald rearrangement to furnish the aldehyde intermediate. Rapid enolization of the aldehyde intermediate would give the beta-methoxyacrylate skeleton and methylations catalyzed by str2 and str3 complete the synthesis and lead to the production of strobilurin A. The short-chain dehydrogenase stl2 and the dehydrogenase str4 play a role in the shunt pathway leading to the production of bolineol. The cluster encodes no obvious halogenase gene that could be involved in production of strobilurin B, nor any obvious dimethylallyl-transferase that could be involved in the production of strobilurin G. It is possible that unknown proteins encoded in, or near, the cluster (such as str1 or stl1) may form new classes of halogenases or dimethylally-transferases, or that the responsible genes are located elsewhere on the genome. Similarly, proteins encoded by str5/str6 hydrolases appear to have no chemical role in the biosynthesis of strobilurin A. Finally, no obvious self-resistance gene is found within the cluster. The sequence is that of Methyltransferase str3 from Strobilurus tenacellus.